The chain runs to 223 residues: Class E basic helix-loop-helix protein 23 (223 aa).

Residues 32-93 (PETTRGFGAS…GVAVDARRRP (62 aa)) form a disordered region. The 55-residue stretch at 98 to 152 (SLRLSINARERRRMHDLNDALDGLRAVIPYAHSPSVRKLSKIATLLLAKNYILMQ) folds into the bHLH domain.

In terms of tissue distribution, expressed in brain and retina.

It localises to the nucleus. Its function is as follows. May function as transcriptional repressor. May modulate the expression of genes required for the differentiation and/or maintenance of pancreatic and neuronal cell types. May be important for rod bipolar cell maturation. The chain is Class E basic helix-loop-helix protein 23 (Bhlhe23) from Mus musculus (Mouse).